Here is a 139-residue protein sequence, read N- to C-terminus: Plastocyanin (139 aa).

A signal peptide spans 1-34; sequence MKLISASLRRFSLAVLTILLVVSSFAVFTPSASA. A Plastocyanin-like domain is found at 35-139; sequence ETYQVKLGTD…GMVGTITVQG (105 aa). Cu cation is bound by residues H73, C123, H126, and M131.

Belongs to the plastocyanin family. Cu(2+) is required as a cofactor.

It localises to the cellular thylakoid membrane. Its function is as follows. Participates in electron transfer between P700 and the cytochrome b6-f complex in photosystem I. The polypeptide is Plastocyanin (Nostoc punctiforme (strain ATCC 29133 / PCC 73102)).